Reading from the N-terminus, the 136-residue chain is Large ribosomal subunit protein bL17 (136 aa).

The protein belongs to the bacterial ribosomal protein bL17 family. Part of the 50S ribosomal subunit. Contacts protein L32.

The protein is Large ribosomal subunit protein bL17 of Rickettsia peacockii (strain Rustic).